A 72-amino-acid polypeptide reads, in one-letter code: Guanine nucleotide-binding protein subunit gamma (72 aa).

The segment at 32–72 (MVSVAPPKANPSVSSKTKQQQHFKPGKATKDKATTKCCTIS) is disordered. A lipid anchor (S-palmitoyl cysteine) is attached at Cys-68. Cys-69 is modified (cysteine methyl ester). Cys-69 carries the S-farnesyl cysteine lipid modification. A propeptide spans 70 to 72 (TIS) (removed in mature form).

Belongs to the G protein gamma family. In terms of assembly, g proteins are composed of 3 units, alpha, beta and gamma. Binding of the beta-gamma subunit complex (git5-git11) to the alpha subunit (gpa2) facilitates interaction with GPCR git3.

The protein localises to the cell membrane. Its function is as follows. Gamma subunit of the heterotrimeric guanine nucleotide-binding protein (G protein) involved in glucose-induced cAMP signaling. The beta-gamma subunits (git5-git11) promote binding of the alpha subunit gpa2 to GPCR git3, which senses extracellular glucose, to activate cAMP-PKA signaling and repress sexual development and gluconeogenesis. The sequence is that of Guanine nucleotide-binding protein subunit gamma (git11) from Schizosaccharomyces pombe (strain 972 / ATCC 24843) (Fission yeast).